Reading from the N-terminus, the 386-residue chain is Caspase-12 (386 aa).

The CARD domain occupies 1–91 (MAGKRQSQDP…LLSLKSHAEN (91 aa)). Serine 84 bears the Phosphoserine mark. Catalysis depends on residues histidine 218 and cysteine 266.

This sequence belongs to the peptidase C14A family. In terms of assembly, heterotetramer that consists of two anti-parallel arranged heterodimers, each one formed by two subunits (Potential). May interact with TRAF2.

Functionally, involved in the activation cascade of caspases responsible for apoptosis execution. This chain is Caspase-12, found in Canis lupus familiaris (Dog).